We begin with the raw amino-acid sequence, 88 residues long: uncharacterized protein (88 aa).

The signal sequence occupies residues 1–22 (MLKASILFITISLTLMLENSYG). 3 disulfides stabilise this stretch: C59-C73, C66-C77, and C72-C82.

It is found in the secreted. This is an uncharacterized protein from Schistosoma japonicum (Blood fluke).